Consider the following 200-residue polypeptide: NADH-quinone oxidoreductase subunit C (200 aa).

It belongs to the complex I 30 kDa subunit family. As to quaternary structure, NDH-1 is composed of 14 different subunits. Subunits NuoB, C, D, E, F, and G constitute the peripheral sector of the complex.

The protein localises to the cell inner membrane. It catalyses the reaction a quinone + NADH + 5 H(+)(in) = a quinol + NAD(+) + 4 H(+)(out). Functionally, NDH-1 shuttles electrons from NADH, via FMN and iron-sulfur (Fe-S) centers, to quinones in the respiratory chain. The immediate electron acceptor for the enzyme in this species is believed to be ubiquinone. Couples the redox reaction to proton translocation (for every two electrons transferred, four hydrogen ions are translocated across the cytoplasmic membrane), and thus conserves the redox energy in a proton gradient. The protein is NADH-quinone oxidoreductase subunit C of Burkholderia mallei (strain NCTC 10247).